A 447-amino-acid polypeptide reads, in one-letter code: Argininosuccinate synthase (447 aa).

Residues 17–25 (AFSGGLDTS) and alanine 43 each bind ATP. L-citrulline is bound at residue tyrosine 99. Glycine 129 and threonine 131 together coordinate ATP. L-aspartate contacts are provided by threonine 131, asparagine 135, and aspartate 136. Position 135 (asparagine 135) interacts with L-citrulline. Position 136 (aspartate 136) interacts with ATP. L-citrulline is bound by residues arginine 139 and serine 192. Residue aspartate 194 participates in ATP binding. Positions 201, 203, and 280 each coordinate L-citrulline.

It belongs to the argininosuccinate synthase family. Type 2 subfamily. Homotetramer.

It localises to the cytoplasm. The catalysed reaction is L-citrulline + L-aspartate + ATP = 2-(N(omega)-L-arginino)succinate + AMP + diphosphate + H(+). It participates in amino-acid biosynthesis; L-arginine biosynthesis; L-arginine from L-ornithine and carbamoyl phosphate: step 2/3. The polypeptide is Argininosuccinate synthase (Escherichia fergusonii (strain ATCC 35469 / DSM 13698 / CCUG 18766 / IAM 14443 / JCM 21226 / LMG 7866 / NBRC 102419 / NCTC 12128 / CDC 0568-73)).